The sequence spans 153 residues: MKTFSLKPADVEKKWVIIDAEGLVVGRLASIVAMRLRGKHKPQYTPHVDCGDNVIVINADKVKFTGRKYDQKVYYHHTGFPGGIKERSAKYILEGRFPERVVEKAVERMLPRGPLFRRILGNLRVYKGSEHPHAAQQPETLDVAALNRKNVSA.

The protein belongs to the universal ribosomal protein uL13 family. As to quaternary structure, part of the 50S ribosomal subunit.

This protein is one of the early assembly proteins of the 50S ribosomal subunit, although it is not seen to bind rRNA by itself. It is important during the early stages of 50S assembly. This is Large ribosomal subunit protein uL13 from Methylobacterium sp. (strain 4-46).